Consider the following 54-residue polypeptide: uncharacterized protein (54 aa).

Residues 1 to 28 show a composition bias toward basic and acidic residues; it reads MDRKKDEIQRKYREQMREKKEREKEDGS. Positions 1–29 are disordered; the sequence is MDRKKDEIQRKYREQMREKKEREKEDGSS. Residues 31–51 traverse the membrane as a helical segment; the sequence is TFEIVVVLAIIILMFFFNSVF.

The protein localises to the cell membrane. This is an uncharacterized protein from Bacillus subtilis (strain 168).